We begin with the raw amino-acid sequence, 558 residues long: Type I restriction enzyme MjaIX methylase subunit (558 aa).

The tract at residues 1-37 is disordered; sequence MATLDKFLSIKENDEKTKKKESKKKSSKSNKTSESLV. Residues 8–18 show a composition bias toward basic and acidic residues; the sequence is LSIKENDEKTK. Residues 19–28 are compositionally biased toward basic residues; that stretch reads KKESKKKSSK. S-adenosyl-L-methionine is bound by residues 227 to 232, 256 to 258, and aspartate 283; these read KFYTPR and SGG.

It belongs to the N(4)/N(6)-methyltransferase family. The type I restriction/modification system is composed of three polypeptides R, M and S.

It catalyses the reaction a 2'-deoxyadenosine in DNA + S-adenosyl-L-methionine = an N(6)-methyl-2'-deoxyadenosine in DNA + S-adenosyl-L-homocysteine + H(+). Its function is as follows. The subtype gamma methyltransferase (M) subunit of a type I restriction enzyme. The M and S subunits together form a methyltransferase (MTase) that methylates A-3 on the top and A-2 on the bottom strand of the sequence 5'-CCAN(5)GTR-3'. In the presence of the R subunit the complex can also act as an endonuclease, binding to the same target sequence but cutting the DNA some distance from this site. Whether the DNA is cut or modified depends on the methylation state of the target sequence. When the target site is unmodified, the DNA is cut. When the target site is hemimethylated, the complex acts as a maintenance MTase modifying the DNA so that both strands become methylated. After locating a non-methylated recognition site, the enzyme complex serves as a molecular motor that translocates DNA in an ATP-dependent manner until a collision occurs that triggers cleavage. The chain is Type I restriction enzyme MjaIX methylase subunit from Methanocaldococcus jannaschii (strain ATCC 43067 / DSM 2661 / JAL-1 / JCM 10045 / NBRC 100440) (Methanococcus jannaschii).